A 602-amino-acid polypeptide reads, in one-letter code: MATPCIQNAFRRKTLPVRIGDLFVGSEHSIKIQSMTTTATTDVDGTVRQICALQELGCDIVRVTVQGLREVHACEHIKDRLIQQNISIPLVADIHFFPQAAIHVVDCVDKVRINPGNYVDKRNMFTGKIYSDEQYAHSLEHLMNKFSPLVEKCKRLGKAMRIGVNHGSLSERVTQRYGNTIEGMVYSALEYAEVCVAMDYHDVIFSMKSSNPKVMVAAYRSLAYELDQREWSYPLHLGVTEAGSGTAGIVKSAVGIGTLLSEGLGDTIRCSLTGSPINEIPICIDLLKQTTELSERWGEADNPFAIHSSKQLGTRNTLNTPPWDNVYGLLINLTDVQLLTAEPIELLQCLGIDTTTGKIDPTTPEGVVVPKAMRSSPIVSEIEKHLLVFNKEDAPILNPMNEEEWLSEETLSAPFVYFEVTDIHTARRFFSLRQHSTQPVCLSFSLDPHLSKNEAIIDLSARLGALLLDGLGSCVLLDFVDIKLSRTLGFLILQSANIRSVTVEYVSCPGCGRTLFDLLAVSQRIRERTKHLPGGLKIAVMGCIVNGPGEMADADFGYVGSKPGMIDLYVKHKCVKSCIPIENAEEELVQLLKEHGVWKEPE.

[4Fe-4S] cluster-binding residues include C508, C511, C543, and E550.

Belongs to the IspG family. It depends on [4Fe-4S] cluster as a cofactor.

It carries out the reaction (2E)-4-hydroxy-3-methylbut-2-enyl diphosphate + oxidized [flavodoxin] + H2O + 2 H(+) = 2-C-methyl-D-erythritol 2,4-cyclic diphosphate + reduced [flavodoxin]. The protein operates within isoprenoid biosynthesis; isopentenyl diphosphate biosynthesis via DXP pathway; isopentenyl diphosphate from 1-deoxy-D-xylulose 5-phosphate: step 5/6. Its function is as follows. Converts 2C-methyl-D-erythritol 2,4-cyclodiphosphate (ME-2,4cPP) into 1-hydroxy-2-methyl-2-(E)-butenyl 4-diphosphate. In Chlamydia trachomatis serovar L2 (strain ATCC VR-902B / DSM 19102 / 434/Bu), this protein is 4-hydroxy-3-methylbut-2-en-1-yl diphosphate synthase (flavodoxin).